Reading from the N-terminus, the 156-residue chain is MSLDVDIQIASEEADLPSEEQLILWAQAALRETGDREVTIRIVDAEESRELNAQYRGKDKPTNVLSFPFENPPGLTLPLLGDLVICAPVVFNEAVEQQKTAAAHWAHMVIHGMLHLQGYDHIIDEEAEVMESLETELVTSLGFPPPYATNSSLAEG.

Zn(2+)-binding residues include H111, H115, and H121.

It belongs to the endoribonuclease YbeY family. Zn(2+) serves as cofactor.

It localises to the cytoplasm. Single strand-specific metallo-endoribonuclease involved in late-stage 70S ribosome quality control and in maturation of the 3' terminus of the 16S rRNA. The sequence is that of Endoribonuclease YbeY from Hahella chejuensis (strain KCTC 2396).